The chain runs to 363 residues: Eukaryotic translation initiation factor 3 subunit H (363 aa).

Residues 13–163 (VQVEALVVMK…LRAFRLSTAF (151 aa)) enclose the MPN domain.

It belongs to the eIF-3 subunit H family. Component of the eukaryotic translation initiation factor 3 (eIF-3) complex.

It localises to the cytoplasm. Functionally, component of the eukaryotic translation initiation factor 3 (eIF-3) complex, which is involved in protein synthesis of a specialized repertoire of mRNAs and, together with other initiation factors, stimulates binding of mRNA and methionyl-tRNAi to the 40S ribosome. The eIF-3 complex specifically targets and initiates translation of a subset of mRNAs involved in cell proliferation. The polypeptide is Eukaryotic translation initiation factor 3 subunit H (Pyricularia oryzae (strain 70-15 / ATCC MYA-4617 / FGSC 8958) (Rice blast fungus)).